We begin with the raw amino-acid sequence, 492 residues long: Cytochrome P450 2A1 (492 aa).

A Phosphoserine modification is found at Ser130. Cys437 lines the heme pocket.

It belongs to the cytochrome P450 family. Heme is required as a cofactor. As to expression, liver and testis.

The protein localises to the endoplasmic reticulum membrane. The protein resides in the microsome membrane. It catalyses the reaction an organic molecule + reduced [NADPH--hemoprotein reductase] + O2 = an alcohol + oxidized [NADPH--hemoprotein reductase] + H2O + H(+). Functionally, highly active in the 7-alpha-hydroxylation of testosterone, progesterone and androstenedione. The protein is Cytochrome P450 2A1 (Cyp2a1) of Rattus norvegicus (Rat).